The following is a 498-amino-acid chain: ATP synthase subunit beta, chloroplastic (498 aa).

172-179 is a binding site for ATP; it reads GGAGVGKT.

It belongs to the ATPase alpha/beta chains family. In terms of assembly, F-type ATPases have 2 components, CF(1) - the catalytic core - and CF(0) - the membrane proton channel. CF(1) has five subunits: alpha(3), beta(3), gamma(1), delta(1), epsilon(1). CF(0) has four main subunits: a(1), b(1), b'(1) and c(9-12).

It is found in the plastid. Its subcellular location is the chloroplast thylakoid membrane. It carries out the reaction ATP + H2O + 4 H(+)(in) = ADP + phosphate + 5 H(+)(out). Functionally, produces ATP from ADP in the presence of a proton gradient across the membrane. The catalytic sites are hosted primarily by the beta subunits. The sequence is that of ATP synthase subunit beta, chloroplastic from Populus alba (White poplar).